A 488-amino-acid chain; its full sequence is Photosystem II CP43 reaction center protein (488 aa).

A propeptide spanning residues 1-29 (MTKVFALGWLLKINLMKTLYSLRRFYHVE) is cleaved from the precursor. Helical transmembrane passes span 84 to 108 (LFEV…PHLA), 149 to 170 (LIGP…RDKN), 193 to 215 (KALF…RFVS), 270 to 290 (KPFA…LSYS), and 306 to 327 (WYNN…ASQA). A [CaMn4O5] cluster-binding site is contributed by E382. Residues 462-486 (RARAAAAGFEKGINRENEPVLSMRP) form a helical membrane-spanning segment.

It belongs to the PsbB/PsbC family. PsbC subfamily. In terms of assembly, PSII is composed of 1 copy each of membrane proteins PsbA, PsbB, PsbC, PsbD, PsbE, PsbF, PsbH, PsbI, PsbJ, PsbK, PsbL, PsbM, PsbT, PsbX, PsbY, PsbZ, Psb30/Ycf12, at least 3 peripheral proteins of the oxygen-evolving complex and a large number of cofactors. It forms dimeric complexes. It depends on Binds multiple chlorophylls and provides some of the ligands for the Ca-4Mn-5O cluster of the oxygen-evolving complex. It may also provide a ligand for a Cl- that is required for oxygen evolution. PSII binds additional chlorophylls, carotenoids and specific lipids. as a cofactor.

The protein resides in the plastid. The protein localises to the chloroplast thylakoid membrane. In terms of biological role, one of the components of the core complex of photosystem II (PSII). It binds chlorophyll and helps catalyze the primary light-induced photochemical processes of PSII. PSII is a light-driven water:plastoquinone oxidoreductase, using light energy to abstract electrons from H(2)O, generating O(2) and a proton gradient subsequently used for ATP formation. The sequence is that of Photosystem II CP43 reaction center protein from Pyropia yezoensis (Susabi-nori).